The sequence spans 118 residues: Secreted RxLR effector protein 143 (118 aa).

The N-terminal stretch at 1–18 (MRHCAFLFRLFLIGYSCS) is a signal peptide. Over residues 35-65 (DELPRAEQWDSDGKRILQADDPEHIPTEERG) the composition is skewed to basic and acidic residues. The segment at 35–66 (DELPRAEQWDSDGKRILQADDPEHIPTEERGI) is disordered. The short motif at 49-64 (RILQADDPEHIPTEER) is the RxLR-dEER element.

Belongs to the RxLR effector family.

The protein localises to the secreted. It is found in the host cell membrane. Its function is as follows. Secreted effector that completely suppresses the host cell death induced by cell death-inducing proteins. In Plasmopara viticola (Downy mildew of grapevine), this protein is Secreted RxLR effector protein 143.